A 360-amino-acid polypeptide reads, in one-letter code: Peptide chain release factor 1 (360 aa).

Q235 is subject to N5-methylglutamine. A disordered region spans residues 284–313; the sequence is AKRQQAEASTRRNLLGSGDRSDRNRTYNFP.

The protein belongs to the prokaryotic/mitochondrial release factor family. In terms of processing, methylated by PrmC. Methylation increases the termination efficiency of RF1.

It is found in the cytoplasm. Its function is as follows. Peptide chain release factor 1 directs the termination of translation in response to the peptide chain termination codons UAG and UAA. This is Peptide chain release factor 1 from Salmonella schwarzengrund (strain CVM19633).